Reading from the N-terminus, the 417-residue chain is Serine hydroxymethyltransferase (417 aa).

Residues Leu-112 and 116 to 118 each bind (6S)-5,6,7,8-tetrahydrofolate; that span reads GHL. Position 221 is an N6-(pyridoxal phosphate)lysine (Lys-221). Glu-247 contributes to the (6S)-5,6,7,8-tetrahydrofolate binding site.

The protein belongs to the SHMT family. Homodimer. The cofactor is pyridoxal 5'-phosphate.

Its subcellular location is the cytoplasm. It carries out the reaction (6R)-5,10-methylene-5,6,7,8-tetrahydrofolate + glycine + H2O = (6S)-5,6,7,8-tetrahydrofolate + L-serine. It functions in the pathway one-carbon metabolism; tetrahydrofolate interconversion. Its pathway is amino-acid biosynthesis; glycine biosynthesis; glycine from L-serine: step 1/1. Its function is as follows. Catalyzes the reversible interconversion of serine and glycine with tetrahydrofolate (THF) serving as the one-carbon carrier. This reaction serves as the major source of one-carbon groups required for the biosynthesis of purines, thymidylate, methionine, and other important biomolecules. Also exhibits THF-independent aldolase activity toward beta-hydroxyamino acids, producing glycine and aldehydes, via a retro-aldol mechanism. The polypeptide is Serine hydroxymethyltransferase (Borrelia garinii subsp. bavariensis (strain ATCC BAA-2496 / DSM 23469 / PBi) (Borreliella bavariensis)).